Consider the following 34-residue polypeptide: Photosystem II reaction center protein Psb30 (34 aa).

Residues 7–27 (VAQLISLFLILTSGPAIIVLI) traverse the membrane as a helical segment.

It belongs to the Psb30/Ycf12 family. In terms of assembly, PSII is composed of 1 copy each of membrane proteins PsbA, PsbB, PsbC, PsbD, PsbE, PsbF, PsbH, PsbI, PsbJ, PsbK, PsbL, PsbM, PsbT, PsbX, PsbY, PsbZ, Psb30/Ycf12, peripheral proteins of the oxygen-evolving complex and a large number of cofactors. It forms dimeric complexes.

The protein resides in the plastid. It localises to the chloroplast thylakoid membrane. Its function is as follows. A core subunit of photosystem II (PSII), probably helps stabilize the reaction center. In Rhodomonas salina (Cryptomonas salina), this protein is Photosystem II reaction center protein Psb30.